The sequence spans 160 residues: Phosphopantetheine adenylyltransferase (160 aa).

Residue T9 coordinates substrate. Residues 9 to 10 (TF) and H17 contribute to the ATP site. The substrate site is built by K41, L73, and R87. ATP contacts are provided by residues 88 to 90 (GLR), E98, and 123 to 129 (YSFISST).

It belongs to the bacterial CoaD family. As to quaternary structure, homohexamer. Requires Mg(2+) as cofactor.

The protein localises to the cytoplasm. The catalysed reaction is (R)-4'-phosphopantetheine + ATP + H(+) = 3'-dephospho-CoA + diphosphate. Its pathway is cofactor biosynthesis; coenzyme A biosynthesis; CoA from (R)-pantothenate: step 4/5. Reversibly transfers an adenylyl group from ATP to 4'-phosphopantetheine, yielding dephospho-CoA (dPCoA) and pyrophosphate. The sequence is that of Phosphopantetheine adenylyltransferase from Ectopseudomonas mendocina (strain ymp) (Pseudomonas mendocina).